Here is a 454-residue protein sequence, read N- to C-terminus: Maintenance of mitochondrial morphology protein 1 (454 aa).

At 1 to 128 (MSMVIGIGDL…QSSGWGFAHG (128 aa)) the chain is on the lumenal side. Residues 129-149 (LLVGQLSVVAVLAFFIKFFIF) form a helical membrane-spanning segment. At 150–454 (GNSSMARPLM…SESETAVDSN (305 aa)) the chain is on the cytoplasmic side. One can recognise an SMP-LTD domain in the interval 207–430 (QSESLDWFNV…EPRFQLIELP (224 aa)).

It belongs to the MMM1 family. Homodimer. Component of the ER-mitochondria encounter structure (ERMES) or MDM complex, composed of MMM1, MDM10, MDM12 and MDM34. An MMM1 homodimer associates with one molecule of MDM12 on each side in a pairwise head-to-tail manner, and the SMP-LTD domains of MMM1 and MDM12 generate a continuous hydrophobic tunnel for phospholipid trafficking.

Its subcellular location is the endoplasmic reticulum membrane. Its function is as follows. Component of the ERMES/MDM complex, which serves as a molecular tether to connect the endoplasmic reticulum (ER) and mitochondria. Components of this complex are involved in the control of mitochondrial shape and protein biogenesis, and function in nonvesicular lipid trafficking between the ER and mitochondria. The MDM12-MMM1 subcomplex functions in the major beta-barrel assembly pathway that is responsible for biogenesis of all outer membrane beta-barrel proteins, and acts in a late step after the SAM complex. The MDM10-MDM12-MMM1 subcomplex further acts in the TOM40-specific pathway after the action of the MDM12-MMM1 complex. Essential for establishing and maintaining the structure of mitochondria and maintenance of mtDNA nucleoids. This Komagataella phaffii (strain GS115 / ATCC 20864) (Yeast) protein is Maintenance of mitochondrial morphology protein 1.